Here is a 349-residue protein sequence, read N- to C-terminus: tRNA pseudouridine synthase D (349 aa).

A substrate-binding site is contributed by phenylalanine 27. Aspartate 80 functions as the Nucleophile in the catalytic mechanism. Substrate is bound at residue asparagine 129. Positions glycine 155–leucine 303 constitute a TRUD domain. Phenylalanine 329 is a binding site for substrate.

The protein belongs to the pseudouridine synthase TruD family.

It carries out the reaction uridine(13) in tRNA = pseudouridine(13) in tRNA. In terms of biological role, responsible for synthesis of pseudouridine from uracil-13 in transfer RNAs. In Shigella dysenteriae serotype 1 (strain Sd197), this protein is tRNA pseudouridine synthase D.